Consider the following 853-residue polypeptide: E3 ubiquitin-protein ligase RNF216 (853 aa).

3 disordered regions span residues 33–102 (TISD…DDIV), 125–152 (PLEV…ASVD), and 165–228 (PYFQ…AHPL). Positions 53 to 73 (QQEDDLDDDVILTEDDSEDEY) are enriched in acidic residues. Residue K89 forms a Glycyl lysine isopeptide (Lys-Gly) (interchain with G-Cter in SUMO2) linkage. Glycyl lysine isopeptide (Lys-Gly) (interchain with G-Cter in SUMO2) cross-links involve residues K339 and K342. S407 bears the Phosphoserine mark. Residues K413, K418, K436, K447, and K473 each participate in a glycyl lysine isopeptide (Lys-Gly) (interchain with G-Cter in SUMO2) cross-link. Residues 463–479 (VKQEQEFYEQKIKEMAE) adopt a coiled-coil conformation. Positions 499 to 716 (QLIECRCCYG…SPGAPCQECS (218 aa)) are TRIAD supradomain. C503, C506, C525, C528, C593, and C596 together coordinate Zn(2+). Residues 503–552 (CRCCYGEFPFEELTQCADAHLFCKECLIRYAQEAVFGSGKSELSCMEGSC) form an RING-type 1 zinc finger. The IBR-type zinc-finger motif lies at 571-636 (YKYYERKAEE…LWKEHNGLTC (66 aa)). K607 is covalently cross-linked (Glycyl lysine isopeptide (Lys-Gly) (interchain with G-Cter in SUMO2)). The Zn(2+) site is built by C611, C616, C621, C624, H631, and C636. Residues K646 and K654 each participate in a glycyl lysine isopeptide (Lys-Gly) (interchain with G-Cter in SUMO2) cross-link. Zn(2+) contacts are provided by C663 and C666. The RING-type 2; atypical zinc-finger motif lies at 663-691 (CHKCGTGLIKSEGCNRMSCRCGAQMCYLC). C676 is a catalytic residue. Zn(2+) contacts are provided by C681, C683, C688, C691, H704, and C712. The stretch at 725 to 751 (TEDDEKLIEEIQKEAEEEQKRKNGENT) forms a coiled coil. Glycyl lysine isopeptide (Lys-Gly) (interchain with G-Cter in SUMO2) cross-links involve residues K753 and K761.

As to quaternary structure, interacts with UBE2L3 and to some extent with UBE2L6. Interacts with TRAF3, TLR3, TLR4, TLR5 and TLR9. Isoform 3/ZIN binds RIPK1. Auto-ubiquitinated. Post-translationally, phosphorylation at Ser-719 enhances acceptor ubiquitin binding and chain-type specificity towards 'Lys-63' di-ubiquitin but not di-ubiquitin with other linkage types.

It localises to the cytoplasm. It is found in the cytoplasmic vesicle. The protein localises to the clathrin-coated vesicle. The catalysed reaction is S-ubiquitinyl-[E2 ubiquitin-conjugating enzyme]-L-cysteine + [acceptor protein]-L-lysine = [E2 ubiquitin-conjugating enzyme]-L-cysteine + N(6)-ubiquitinyl-[acceptor protein]-L-lysine.. It participates in protein modification; protein ubiquitination. Its activity is regulated as follows. Allosterically activated by 'Lys-63'-linked di-ubiquitin. In terms of biological role, E3 ubiquitin ligase which accepts ubiquitin from specific E2 ubiquitin-conjugating enzymes, and then transfers it to substrates promoting their ubiquitination. Plays a role in the regulation of antiviral responses by promoting the degradation of TRAF3, TLR4 and TLR9. In turn, down-regulates NF-kappa-B and IRF3 activation as well as beta interferon production. Also participates in the regulation of autophagy by ubiquitinating BECN1 leading to its degradation and autophagy inhibition. Plays a role in ARC-dependent synaptic plasticity by mediating ARC ubiquitination resulting in its rapid proteasomal degradation. Plays aso an essential role in spermatogenesis and male fertility. Mechanistically, regulates meiosis by promoting the degradation of PRKACB through the ubiquitin-mediated lysosome pathway. Modulates the gonadotropin-releasing hormone signal pathway by affecting the stability of STAU2 that is required for the microtubule-dependent transport of neuronal RNA from the cell body to the dendrite. The protein is E3 ubiquitin-protein ligase RNF216 (Rnf216) of Mus musculus (Mouse).